The following is a 226-amino-acid chain: uncharacterized protein (226 aa).

Positions Leu-18–Val-219 constitute an N-acetyltransferase domain.

This sequence belongs to the acetyltransferase family.

This is an uncharacterized protein from Bacillus subtilis (strain 168).